We begin with the raw amino-acid sequence, 262 residues long: Thiazole synthase (262 aa).

K97 functions as the Schiff-base intermediate with DXP in the catalytic mechanism. Residues G158, 185–186 (AG), and 207–208 (NT) each bind 1-deoxy-D-xylulose 5-phosphate.

It belongs to the ThiG family. In terms of assembly, homotetramer. Forms heterodimers with either ThiH or ThiS.

It is found in the cytoplasm. It carries out the reaction [ThiS sulfur-carrier protein]-C-terminal-Gly-aminoethanethioate + 2-iminoacetate + 1-deoxy-D-xylulose 5-phosphate = [ThiS sulfur-carrier protein]-C-terminal Gly-Gly + 2-[(2R,5Z)-2-carboxy-4-methylthiazol-5(2H)-ylidene]ethyl phosphate + 2 H2O + H(+). Its pathway is cofactor biosynthesis; thiamine diphosphate biosynthesis. Functionally, catalyzes the rearrangement of 1-deoxy-D-xylulose 5-phosphate (DXP) to produce the thiazole phosphate moiety of thiamine. Sulfur is provided by the thiocarboxylate moiety of the carrier protein ThiS. In vitro, sulfur can be provided by H(2)S. In Neisseria gonorrhoeae (strain ATCC 700825 / FA 1090), this protein is Thiazole synthase.